The sequence spans 525 residues: Anti-silencing protein 2 (525 aa).

The tract at residues 467–525 (LPRVPTDSPQLPSKDKSQETAKKDDRPKLVANEPVTLDTSTPPVAQSLADSKHCSGLHK) is disordered. Basic and acidic residues predominate over residues 479–494 (SKDKSQETAKKDDRPK).

Functionally, derepression of silent mating type loci when overexpressed. The chain is Anti-silencing protein 2 (ASF2) from Saccharomyces cerevisiae (strain ATCC 204508 / S288c) (Baker's yeast).